Here is a 388-residue protein sequence, read N- to C-terminus: (S)-8-oxocitronellyl enol synthase ISY1 (388 aa).

NADP(+)-binding positions include 35–37 (TGI), 63–64 (RR), 81–82 (DV), 105–106 (TW), and Gln143. Active-site residues include Lys147 and Tyr178. NADP(+) is bound by residues Tyr178, Ile205, and 212–214 (SMM).

Belongs to the short-chain dehydrogenases/reductases (SDR) family.

The enzyme catalyses (S)-8-oxocitronellyl enol + NADP(+) = (6E)-8-oxogeranial + NADPH + H(+). It catalyses the reaction (S)-8-oxocitronellyl enol + NAD(+) = (6E)-8-oxogeranial + NADH + H(+). In terms of biological role, iridoid synthase that catalyzes the first step in generation of the iridoid ring scaffold using the linear monoterpene (6E)-8-oxogeranial as substrate. Iridoids comprise a large family of distinctive bicyclic monoterpenes that possess a wide range of pharmacological activities, including anticancer, anti-inflammatory, antifungal and antibacterial activities. Catalyzes the conversion of the linear monoterpene (6E)-8-oxogeranial to (S)-8-oxocitronellyl enol, a precursor of nepetalactones, which are metabolites that are both insect-repellent and have euphoric effect in cats. This chain is (S)-8-oxocitronellyl enol synthase ISY1, found in Nepeta racemosa (Catmint).